Reading from the N-terminus, the 475-residue chain is Trifunctional enzyme subunit beta, mitochondrial (475 aa).

Residues 1–34 constitute a mitochondrion transit peptide; the sequence is MTTILTCPFKKLPTTSKWALRFAIRPLSCSSQLR. Lys73 is subject to N6-acetyllysine; alternate. Lys73 carries the post-translational modification N6-succinyllysine; alternate. Catalysis depends on Cys139, which acts as the Acyl-thioester intermediate. Residues 174–221 lie within the membrane without spanning it; that stretch reads IRHSRKMRKLMLDLNKAKSMGQRLSLISKFRLNFLAPELPAVAEFSTS. Residue Lys189 is modified to N6-acetyllysine; alternate. Lys189 carries the post-translational modification N6-succinyllysine; alternate. An N6-succinyllysine mark is found at Lys191, Lys273, and Lys292. Lys294 bears the N6-acetyllysine; alternate mark. Position 294 is an N6-succinyllysine; alternate (Lys294). An N6-acetyllysine modification is found at Lys299. Lys333 is modified (N6-acetyllysine; alternate). Lys333 is subject to N6-succinyllysine; alternate. Residues Lys349 and Lys362 each carry the N6-acetyllysine modification. Cys459 serves as the catalytic Proton donor/acceptor.

It belongs to the thiolase-like superfamily. Thiolase family. In terms of assembly, heterotetramer of 2 alpha/HADHA and 2 beta/HADHB subunits; forms the mitochondrial trifunctional enzyme. Also purified as higher order heterooligomers including a 4 alpha/HADHA and 4 beta/HADHB heterooligomer which physiological significance remains unclear. The mitochondrial trifunctional enzyme interacts with MTLN. Interacts with RSAD2/viperin.

The protein localises to the mitochondrion. It localises to the mitochondrion inner membrane. It is found in the mitochondrion outer membrane. Its subcellular location is the endoplasmic reticulum. The enzyme catalyses an acyl-CoA + acetyl-CoA = a 3-oxoacyl-CoA + CoA. It catalyses the reaction butanoyl-CoA + acetyl-CoA = 3-oxohexanoyl-CoA + CoA. It carries out the reaction hexanoyl-CoA + acetyl-CoA = 3-oxooctanoyl-CoA + CoA. The catalysed reaction is octanoyl-CoA + acetyl-CoA = 3-oxodecanoyl-CoA + CoA. The enzyme catalyses decanoyl-CoA + acetyl-CoA = 3-oxododecanoyl-CoA + CoA. It catalyses the reaction dodecanoyl-CoA + acetyl-CoA = 3-oxotetradecanoyl-CoA + CoA. It carries out the reaction tetradecanoyl-CoA + acetyl-CoA = 3-oxohexadecanoyl-CoA + CoA. Its pathway is lipid metabolism; fatty acid beta-oxidation. Mitochondrial trifunctional enzyme catalyzes the last three of the four reactions of the mitochondrial beta-oxidation pathway. The mitochondrial beta-oxidation pathway is the major energy-producing process in tissues and is performed through four consecutive reactions breaking down fatty acids into acetyl-CoA. Among the enzymes involved in this pathway, the trifunctional enzyme exhibits specificity for long-chain fatty acids. Mitochondrial trifunctional enzyme is a heterotetrameric complex composed of two proteins, the trifunctional enzyme subunit alpha/HADHA carries the 2,3-enoyl-CoA hydratase and the 3-hydroxyacyl-CoA dehydrogenase activities, while the trifunctional enzyme subunit beta/HADHB described here bears the 3-ketoacyl-CoA thiolase activity. This Macaca fascicularis (Crab-eating macaque) protein is Trifunctional enzyme subunit beta, mitochondrial (HADHB).